Consider the following 42-residue polypeptide: Photosystem I reaction center subunit IX (42 aa).

A helical transmembrane segment spans residues 7-27 (YLSVAPVLSTLWFGSLAGLLI).

Belongs to the PsaJ family.

Its subcellular location is the plastid. The protein localises to the chloroplast thylakoid membrane. Its function is as follows. May help in the organization of the PsaE and PsaF subunits. The sequence is that of Photosystem I reaction center subunit IX from Lepidium virginicum (Virginia pepperweed).